A 228-amino-acid chain; its full sequence is MAELNDYSTMIDILLSDMDLETVTTKKVRMALKEVYAIDVESQGKAINKLIRKHLDLVKERPRFERSLEDLLKENATLAIELTKEITVSKRSSGEEKNDSETKGTHVEKKKGTVSKSPISTRKVTLSKSLASLLGEHELTRTEVVRRLWAYIKAHNLQNPNNKKEILCDEKLELILGKSTNMFEMHKILASHMTEPKKISDCPPLIQEVRRKEKPIVSDSEQSDTKGI.

A DEK-C domain is found at methionine 1–aspartate 56. Basic and acidic residues predominate over residues serine 89–lysine 111. The interval serine 89–proline 118 is disordered. An SWIB/MDM2 domain is found at isoleucine 119 to glutamate 195. Residues valine 209–isoleucine 228 form a disordered region. Phosphoserine is present on residues serine 218, serine 220, and serine 223.

As to quaternary structure, component of the UAF (upstream activation factor) complex which consists of UAF30, RRN5, RRN9, RRN10, and histones H3 and H4.

The protein resides in the nucleus. It is found in the nucleolus. Nonessential component of the UAF (upstream activation factor) complex which interacts with the upstream element of the RNA polymerase I promoter and forms a stable preinitiation complex. Together with SPT15/TBP UAF seems to stimulate basal transcription to a fully activated level. UAF30 seems to play a role in silencing transcription by RNA polymerase II. In Saccharomyces cerevisiae (strain ATCC 204508 / S288c) (Baker's yeast), this protein is Upstream activation factor subunit UAF30 (UAF30).